The chain runs to 94 residues: Putative septation protein SpoVG (94 aa).

Belongs to the SpoVG family.

Its function is as follows. Could be involved in septation. This is Putative septation protein SpoVG from Acetivibrio thermocellus (strain ATCC 27405 / DSM 1237 / JCM 9322 / NBRC 103400 / NCIMB 10682 / NRRL B-4536 / VPI 7372) (Clostridium thermocellum).